The chain runs to 256 residues: 4-oxalocrotonate decarboxylase (256 aa).

The protein belongs to the hydratase/decarboxylase family. In terms of assembly, forms a complex with AmnF. It depends on Mg(2+) as a cofactor. Requires Mn(2+) as cofactor.

The enzyme catalyses (3E)-2-oxohex-3-enedioate + H(+) = 2-oxopent-4-enoate + CO2. Its activity is regulated as follows. Strongly inhibited by Fe(2+), Fe(3+), K(3)[Fe(CN)(6)], Ag(+) and Cu(2+). Involved in the modified meta-cleavage pathway for the 2-aminophenol catabolism. The chain is 4-oxalocrotonate decarboxylase (amnE) from Pseudomonas sp.